The following is a 347-amino-acid chain: MTTASQPPLIMGIESSCDETGVAFVRGCELLADEVASSVDEHARFGGVVPEVASRAHLEAMTPTVRRAAERAGVRLSDVDAIAVTVGPGLAGALLVGLSAAKAYALALDKPLYGVNHLVGHVAVDQLEHGPLPKPVVALLVSGGHTSLLLVRDLATDVQLLGETVDDAAGEAYDKVARLLNLPYPGGPPIDRAARDGDGTAIHFPRGKWGDGTYDFSFSGLKTAVARWVEDAERQGRPVSVPDVAAAFQEAVADVLTRKAVDACREHGVRHLVISGGVAANSRLRALAEERCAAAGIEVRVPRPRLCTDNGAMIAALGAEVVAAGLPPSPLDMAVDTSLPVSSVLVN.

Fe cation contacts are provided by H117 and H121. Residues 140–144, D174, G187, D191, and N281 each bind substrate; that span reads LVSGG. D309 is a binding site for Fe cation.

The protein belongs to the KAE1 / TsaD family. Requires Fe(2+) as cofactor.

It localises to the cytoplasm. It carries out the reaction L-threonylcarbamoyladenylate + adenosine(37) in tRNA = N(6)-L-threonylcarbamoyladenosine(37) in tRNA + AMP + H(+). In terms of biological role, required for the formation of a threonylcarbamoyl group on adenosine at position 37 (t(6)A37) in tRNAs that read codons beginning with adenine. Is involved in the transfer of the threonylcarbamoyl moiety of threonylcarbamoyl-AMP (TC-AMP) to the N6 group of A37, together with TsaE and TsaB. TsaD likely plays a direct catalytic role in this reaction. The polypeptide is tRNA N6-adenosine threonylcarbamoyltransferase (Thermobifida fusca (strain YX)).